The chain runs to 596 residues: DNA mismatch repair protein MutL (596 aa).

It belongs to the DNA mismatch repair MutL/HexB family.

In terms of biological role, this protein is involved in the repair of mismatches in DNA. It is required for dam-dependent methyl-directed DNA mismatch repair. May act as a 'molecular matchmaker', a protein that promotes the formation of a stable complex between two or more DNA-binding proteins in an ATP-dependent manner without itself being part of a final effector complex. The protein is DNA mismatch repair protein MutL of Leptospira borgpetersenii serovar Hardjo-bovis (strain JB197).